The following is a 547-amino-acid chain: Elongator complex protein 3 (547 aa).

The 291-residue stretch at 82 to 372 folds into the Radical SAM core domain; that stretch reads RTASGIAVVA…YRVQRDIPMP (291 aa). Residues cysteine 99, cysteine 109, and cysteine 112 each contribute to the [4Fe-4S] cluster site. Serine 161 carries the phosphoserine modification. Residue lysine 164 coordinates acetyl-CoA. The residue at position 229 (lysine 229) is an N6-methyllysine. Phosphotyrosine is present on tyrosine 251. The N-acetyltransferase domain occupies 396 to 547; sequence IQCRDVRTRE…QGPYMVKMLK (152 aa). Acetyl-CoA is bound by residues 474-477, 497-499, and tyrosine 530; these read ELHV and FGM.

This sequence belongs to the ELP3 family. In terms of assembly, component of the elongator complex which consists of ELP1, ELP2, ELP3, ELP4, ELP5 and ELP6. ELP1, ELP2 and ELP3 form the elongator core complex. Interacts with alpha-tubulin. [4Fe-4S] cluster serves as cofactor. In terms of processing, tyrosine-phosphorylated. Also serine/threonine-phosphorylated.

It is found in the cytoplasm. Its subcellular location is the nucleus. It carries out the reaction uridine(34) in tRNA + acetyl-CoA + S-adenosyl-L-methionine + H2O = 5-(carboxymethyl)uridine(34) in tRNA + 5'-deoxyadenosine + L-methionine + CoA + 2 H(+). It participates in tRNA modification; 5-methoxycarbonylmethyl-2-thiouridine-tRNA biosynthesis. Its function is as follows. Catalytic tRNA acetyltransferase subunit of the elongator complex which is required for multiple tRNA modifications, including mcm5U (5-methoxycarbonylmethyl uridine), mcm5s2U (5-methoxycarbonylmethyl-2-thiouridine), and ncm5U (5-carbamoylmethyl uridine). In the elongator complex, acts as a tRNA uridine(34) acetyltransferase by mediating formation of carboxymethyluridine in the wobble base at position 34 in tRNAs. May also act as a protein lysine acetyltransferase by mediating acetylation of target proteins; such activity is however unclear in vivo and recent evidences suggest that ELP3 primarily acts as a tRNA acetyltransferase. Involved in neurogenesis: regulates the migration and branching of projection neurons in the developing cerebral cortex, through a process depending on alpha-tubulin acetylation. Required for acetylation of GJA1 in the developing cerebral cortex. The protein is Elongator complex protein 3 of Mus musculus (Mouse).